The sequence spans 702 residues: Methionine--tRNA ligase (702 aa).

The 'HIGH' region signature appears at 14–24 (PYANGPVHLGH). Zn(2+)-binding residues include cysteine 146, cysteine 149, cysteine 159, and cysteine 162. Residues 344–348 (KFSKS) carry the 'KMSKS' region motif. Lysine 347 is an ATP binding site. The region spanning 601–702 (EFLKVDLRVA…GKEINGKKIQ (102 aa)) is the tRNA-binding domain.

This sequence belongs to the class-I aminoacyl-tRNA synthetase family. MetG type 1 subfamily. As to quaternary structure, homodimer. Requires Zn(2+) as cofactor.

The protein resides in the cytoplasm. It carries out the reaction tRNA(Met) + L-methionine + ATP = L-methionyl-tRNA(Met) + AMP + diphosphate. Is required not only for elongation of protein synthesis but also for the initiation of all mRNA translation through initiator tRNA(fMet) aminoacylation. This chain is Methionine--tRNA ligase, found in Chlorobium phaeobacteroides (strain DSM 266 / SMG 266 / 2430).